Here is an 804-residue protein sequence, read N- to C-terminus: Phenylalanine--tRNA ligase beta subunit (804 aa).

The tRNA-binding domain maps to 39–147 (GEGLDSVVTA…PDCEPGQPVF (109 aa)). Residues 401–480 (LAERKVTLAV…RLNGYDNIPV (80 aa)) form the B5 domain. Aspartate 458, aspartate 464, glutamate 467, and glutamate 468 together coordinate Mg(2+). The FDX-ACB domain maps to 711–804 (SRFPQVARDS…LIAKLGAEIR (94 aa)).

It belongs to the phenylalanyl-tRNA synthetase beta subunit family. Type 1 subfamily. In terms of assembly, tetramer of two alpha and two beta subunits. The cofactor is Mg(2+).

The protein resides in the cytoplasm. The catalysed reaction is tRNA(Phe) + L-phenylalanine + ATP = L-phenylalanyl-tRNA(Phe) + AMP + diphosphate + H(+). The chain is Phenylalanine--tRNA ligase beta subunit from Syntrophotalea carbinolica (strain DSM 2380 / NBRC 103641 / GraBd1) (Pelobacter carbinolicus).